Here is a 246-residue protein sequence, read N- to C-terminus: Enolase-phosphatase E1 (246 aa).

D15 and E17 together coordinate Mg(2+). Substrate is bound by residues 134-135 and K174; that span reads SS. D201 contacts Mg(2+).

Belongs to the HAD-like hydrolase superfamily. MasA/MtnC family. As to quaternary structure, monomer. It depends on Mg(2+) as a cofactor.

It is found in the cytoplasm. Its subcellular location is the nucleus. The catalysed reaction is 5-methylsulfanyl-2,3-dioxopentyl phosphate + H2O = 1,2-dihydroxy-5-(methylsulfanyl)pent-1-en-3-one + phosphate. The protein operates within amino-acid biosynthesis; L-methionine biosynthesis via salvage pathway; L-methionine from S-methyl-5-thio-alpha-D-ribose 1-phosphate: step 3/6. Its pathway is amino-acid biosynthesis; L-methionine biosynthesis via salvage pathway; L-methionine from S-methyl-5-thio-alpha-D-ribose 1-phosphate: step 4/6. Bifunctional enzyme that catalyzes the enolization of 2,3-diketo-5-methylthiopentyl-1-phosphate (DK-MTP-1-P) into the intermediate 2-hydroxy-3-keto-5-methylthiopentenyl-1-phosphate (HK-MTPenyl-1-P), which is then dephosphorylated to form the acireductone 1,2-dihydroxy-3-keto-5-methylthiopentene (DHK-MTPene). The chain is Enolase-phosphatase E1 from Debaryomyces hansenii (strain ATCC 36239 / CBS 767 / BCRC 21394 / JCM 1990 / NBRC 0083 / IGC 2968) (Yeast).